Consider the following 668-residue polypeptide: Packaging protein UL32 homolog (668 aa).

The span at M1–N10 shows a compositional bias: polar residues. The tract at residues M1–S35 is disordered. Residues P19 to S35 are compositionally biased toward low complexity. Positions 200, 203, 276, and 282 each coordinate Zn(2+). The segment at C200–C282 is zinc finger 1. Composition is skewed to basic and acidic residues over residues S392–M401 and G410–R419. The tract at residues S392–S430 is disordered. C459, C462, H567, and C574 together coordinate Zn(2+). A zinc finger 2 region spans residues C459 to C574.

It belongs to the herpesviridae UL32 protein family.

It is found in the host cytoplasm. The protein localises to the host nucleus. In terms of biological role, plays a role in efficient localization of neo-synthesized capsids to nuclear replication compartments, thereby controlling cleavage and packaging of virus genomic DNA. In Homo sapiens (Human), this protein is Packaging protein UL32 homolog (UL52).